Consider the following 266-residue polypeptide: Nickel import ATP-binding protein NikE (266 aa).

Residues 4 to 252 (ISADNIVKIY…RHPASRLLRE (249 aa)) enclose the ABC transporter domain. 45 to 52 (GRSGCGKS) contacts ATP.

The protein belongs to the ABC transporter superfamily. Nickel importer (TC 3.A.1.5.3) family. As to quaternary structure, the complex is composed of two ATP-binding proteins (NikD and NikE), two transmembrane proteins (NikB and NikC) and a solute-binding protein (NikA).

The protein localises to the cell inner membrane. The enzyme catalyses Ni(2+)(out) + ATP + H2O = Ni(2+)(in) + ADP + phosphate + H(+). In terms of biological role, part of the ABC transporter complex NikABCDE involved in nickel import. Responsible for energy coupling to the transport system. This Brucella suis biovar 1 (strain 1330) protein is Nickel import ATP-binding protein NikE.